Consider the following 480-residue polypeptide: UDP-N-acetylmuramate--L-alanine ligase (480 aa).

122–128 (GTHGKTT) contacts ATP.

Belongs to the MurCDEF family.

The protein localises to the cytoplasm. It catalyses the reaction UDP-N-acetyl-alpha-D-muramate + L-alanine + ATP = UDP-N-acetyl-alpha-D-muramoyl-L-alanine + ADP + phosphate + H(+). It participates in cell wall biogenesis; peptidoglycan biosynthesis. In terms of biological role, cell wall formation. This chain is UDP-N-acetylmuramate--L-alanine ligase, found in Pseudomonas aeruginosa (strain LESB58).